We begin with the raw amino-acid sequence, 365 residues long: MNAKEFLIELLKFKSVTPNDDGALNFIAMELSDFEAFFIEKEGIKNLLLTKKFKDEGEHLAFGGHVDVVPAGEGWSSDAFVPMEKESFIYARGAQDMKSGVAAFVDALKNADFKGARLSLILTSDEEGEAIYGTKAVLEWMQKRDMLPDYAVVAEPTCVKKIGDSIKIGRRGSINGKLLIRGKQGHVAYPEKCINPVHDFAPVLKLLAGFDLDPGSAEFSPSKIVVTDIRGGIEVCNVTPNDLKLMFNVRNSPDTSLEDVKSYVEKICHGLNYELELKQSSEAFLTNIDNKIVQKMNESVQKITHEVPELNTKGGTSDARYFAKYGVKVVEFGVCNDRIHAIDERVSIEEFEKLCLVFKDLIENF.

His-65 is a Zn(2+) binding site. Residue Asp-67 is part of the active site. Residue Asp-96 participates in Zn(2+) binding. Glu-126 serves as the catalytic Proton acceptor. Zn(2+) is bound by residues Glu-127, Glu-155, and His-340.

The protein belongs to the peptidase M20A family. DapE subfamily. As to quaternary structure, homodimer. The cofactor is Zn(2+). Co(2+) is required as a cofactor.

It catalyses the reaction N-succinyl-(2S,6S)-2,6-diaminopimelate + H2O = (2S,6S)-2,6-diaminopimelate + succinate. Its pathway is amino-acid biosynthesis; L-lysine biosynthesis via DAP pathway; LL-2,6-diaminopimelate from (S)-tetrahydrodipicolinate (succinylase route): step 3/3. Its function is as follows. Catalyzes the hydrolysis of N-succinyl-L,L-diaminopimelic acid (SDAP), forming succinate and LL-2,6-diaminopimelate (DAP), an intermediate involved in the bacterial biosynthesis of lysine and meso-diaminopimelic acid, an essential component of bacterial cell walls. This is Succinyl-diaminopimelate desuccinylase from Campylobacter jejuni subsp. doylei (strain ATCC BAA-1458 / RM4099 / 269.97).